A 106-amino-acid chain; its full sequence is DNA-directed RNA polymerase subunit Rpo6 (106 aa).

The protein belongs to the archaeal Rpo6/eukaryotic RPB6 RNA polymerase subunit family. Part of the RNA polymerase complex.

The protein resides in the cytoplasm. The catalysed reaction is RNA(n) + a ribonucleoside 5'-triphosphate = RNA(n+1) + diphosphate. Its function is as follows. DNA-dependent RNA polymerase (RNAP) catalyzes the transcription of DNA into RNA using the four ribonucleoside triphosphates as substrates. This is DNA-directed RNA polymerase subunit Rpo6 from Pyrobaculum aerophilum (strain ATCC 51768 / DSM 7523 / JCM 9630 / CIP 104966 / NBRC 100827 / IM2).